The primary structure comprises 311 residues: Ornithine carbamoyltransferase (311 aa).

Carbamoyl phosphate-binding positions include 57–60 (STRT), glutamine 84, arginine 108, and 135–138 (HPCQ). Residues asparagine 166, aspartate 230, and 234 to 235 (SM) each bind L-ornithine. Residues 270-271 (CL) and arginine 298 each bind carbamoyl phosphate.

This sequence belongs to the aspartate/ornithine carbamoyltransferase superfamily. OTCase family.

It is found in the cytoplasm. It carries out the reaction carbamoyl phosphate + L-ornithine = L-citrulline + phosphate + H(+). It participates in amino-acid biosynthesis; L-arginine biosynthesis; L-arginine from L-ornithine and carbamoyl phosphate: step 1/3. Reversibly catalyzes the transfer of the carbamoyl group from carbamoyl phosphate (CP) to the N(epsilon) atom of ornithine (ORN) to produce L-citrulline. In Carboxydothermus hydrogenoformans (strain ATCC BAA-161 / DSM 6008 / Z-2901), this protein is Ornithine carbamoyltransferase.